Here is a 1860-residue protein sequence, read N- to C-terminus: Collagen alpha-1(XXVII) chain (1860 aa).

The first 41 residues, 1 to 41 (MGAGSARGARGTAAAAAARGGGFLFSWILVSFACHLASTQG), serve as a signal peptide directing secretion. Residues 42-624 (APEDVDILQR…AGSTPFPLLM (583 aa)) constitute a propeptide, N-terminal propeptide. A Laminin G-like domain is found at 71–236 (QSGFIFTQRA…NYCTHLRKQC (166 aa)). The N-linked (GlcNAc...) asparagine glycan is linked to Asn271. 3 disordered regions span residues 278 to 608 (ALGS…TSSG), 625 to 772 (GPPG…GSDG), and 851 to 1625 (LKGD…IQLQ). Composition is skewed to polar residues over residues 298 to 309 (TKPQRTSPTNPH) and 386 to 409 (HPTQ…QVPP). Over residues 432–445 (MPRPPPPSTRPLPP) the composition is skewed to pro residues. Composition is skewed to low complexity over residues 446–457 (TTSSSKKPIPTL) and 485–505 (TALS…RPPA). The segment covering 509 to 518 (PPTSGTSTPR) has biased composition (polar residues). 2 stretches are compositionally biased toward low complexity: residues 572–588 (TTRP…QTTP) and 599–608 (SSSPRPTSSG). Collagen-like domains are found at residues 625 to 679 (GPPG…GDPG), 688 to 747 (GAKG…PGPV), 748 to 807 (GDPG…DGNP), 808 to 867 (GELG…SGDP), 871 to 930 (GDKG…KGKP), 931 to 990 (GARG…PGPV), 1003 to 1062 (GEPG…RGAK), 1066 to 1125 (GPRG…PGTK), 1126 to 1185 (GLPG…IGQR), 1192 to 1251 (GDSG…QGEK), 1258 to 1317 (GAKG…KGIV), 1318 to 1378 (GPLG…RGKP), 1382 to 1441 (GQPG…EGIA), 1442 to 1501 (GPDG…PGQL), 1502 to 1561 (GPPG…QGPR), and 1562 to 1621 (GPPG…PGGP). Residues 625 to 1618 (GPPGPKGDCG…RGRPGPPGPP (994 aa)) form a triple-helical region region. The segment covering 654–669 (RGPPGPYGNPGLPGPP) has biased composition (pro residues). Residues 714–734 (PGPAGHPGEQGQPGPEGSPGA) show a composition bias toward low complexity. Composition is skewed to low complexity over residues 911–924 (FPGD…NGPE) and 932–944 (ARGL…QLGP). Over residues 1033–1042 (GMPGGMGTPG) the composition is skewed to gly residues. Pro residues predominate over residues 1043 to 1053 (EPGPQGPPGSR). Residues 1130–1142 (EPGPQGPQGPIGP) show a composition bias toward pro residues. Composition is skewed to basic and acidic residues over residues 1202 to 1220 (LKGD…EKGQ) and 1241 to 1253 (PEGK…EKGR). 2 stretches are compositionally biased toward basic and acidic residues: residues 1326 to 1338 (KGEK…DGKA) and 1350 to 1360 (PVGDRGDRGEP). Residues 1449 to 1458 (RDGQAGQQGE) are compositionally biased toward low complexity. Low complexity predominate over residues 1572–1587 (IVGPLGILGPSGLPGP). Positions 1603 to 1620 (RGPPGPRGRPGPPGPPGG) are enriched in pro residues. A propeptide spans 1622–1860 (IQLQQDDLGA…RLEVGPACFL (239 aa)) (C-terminal propeptide). Positions 1660–1860 (GEIFKTLHYL…RLEVGPACFL (201 aa)) constitute a Fibrillar collagen NC1 domain. Cystine bridges form between Cys1690–Cys1722, Cys1731–Cys1858, and Cys1767–Cys1811. Ca(2+) contacts are provided by Asp1708, Asn1710, Cys1713, and Asp1716. Residue Asn1769 is glycosylated (N-linked (GlcNAc...) asparagine).

This sequence belongs to the fibrillar collagen family.

The protein resides in the secreted. Its subcellular location is the extracellular space. The protein localises to the extracellular matrix. Functionally, plays a role during the calcification of cartilage and the transition of cartilage to bone. The chain is Collagen alpha-1(XXVII) chain (COL27A1) from Homo sapiens (Human).